The sequence spans 332 residues: Melanocortin receptor 4 (332 aa).

At 1-43 the chain is on the extracellular side; that stretch reads MNSTHHHGMHTSLHFWNRSTYGLHSNASEPLGKGYSEGGCYEQ. N-linked (GlcNAc...) asparagine glycans are attached at residues Asn2, Asn17, and Asn26. 2 cysteine pairs are disulfide-bonded: Cys40/Cys279 and Cys271/Cys277. Residues 44–69 traverse the membrane as a helical segment; sequence LFVSPEVFVTLGVISLLENILVIVAI. The Cytoplasmic portion of the chain corresponds to 70–81; the sequence is AKNKNLHSPMYF. Residues 82-106 traverse the membrane as a helical segment; it reads FICSLAVADMLVSVSNGSETIVITL. Positions 100, 122, and 126 each coordinate Ca(2+). The Extracellular portion of the chain corresponds to 107 to 123; sequence LNSTDTDAQSFTVNIDN. A helical membrane pass occupies residues 124–145; that stretch reads VIDSVICSSLLASICSLLSIAV. Topologically, residues 146–165 are cytoplasmic; the sequence is DRYFTIFYALQYHNIMTVKR. A helical transmembrane segment spans residues 166-186; that stretch reads VGIIISCIWAVCTVSGVLFII. Topologically, residues 187 to 191 are extracellular; the sequence is YSDSS. The chain crosses the membrane as a helical span at residues 192 to 215; the sequence is AVIICLITVFFTMLALMASLYVHM. At 216–248 the chain is on the cytoplasmic side; it reads FLMARLHIKRIAVLPGTGTIRQGANMKGAITLT. Residues 249–271 traverse the membrane as a helical segment; the sequence is ILIGVFVVCWAPFFLHLIFYISC. The Extracellular portion of the chain corresponds to 272 to 280; it reads PQNPYCVCF. The helical transmembrane segment at 281-304 threads the bilayer; sequence MSHFNLYLILIMCNSIIDPLIYAL. The Cytoplasmic portion of the chain corresponds to 305–332; it reads RSQELRKTFKEIICCYPLGGLCDLSSRY. Cys318 is lipidated: S-palmitoyl cysteine.

The protein belongs to the G-protein coupled receptor 1 family. As to quaternary structure, homodimer; disulfide-linked, also forms higher order oligomers. Interacts with GNAS. Interacts with ATRNL1. Interacts with MGRN1; this interaction competes with GNAS-binding and thus inhibits agonist-induced cAMP production. Interacts with MRAP and MRAP2; these associated factors increase ligand-sensitivity and generation of cAMP.

Its subcellular location is the cell membrane. Hormone receptor that acts as a key component of the leptin-melanocortin pathway at the intersection of homeostatic maintenance of energetic state. Plays a role in regulating food intake: activation by a stimulating hormone such as anorexigenic alpha-melanocyte stimulating hormone (alpha-MSH) inhibits appetite, whereas binding to a natural antagonist like Agouti-related protein/AGRP promotes appetite. G-protein-coupled receptor that activates conventional Galphas signaling leading to induction of anorexogenic signaling in the hypothalamus to result in negative energy balance. Regulates the firing activity of neurons from the hypothalamus by alpha-MSH and AGRP independently of Galphas signaling by ligand-induced coupling of closure of inwardly rectifying potassium channel KCNJ13. In intestinal epithelial cells, plays a role in the inhibition of hepatic glucose production via nesfatin-1/NUCB2 leading to increased cyclic adenosine monophosphate (cAMP) levels and glucagon-like peptide 1 (GLP-1) secretion in the intestinal epithelium. The chain is Melanocortin receptor 4 (MC4R) from Sus scrofa (Pig).